The chain runs to 122 residues: Basic phospholipase A2 homolog (122 aa).

7 cysteine pairs are disulfide-bonded: cysteine 26-cysteine 116, cysteine 28-cysteine 44, cysteine 43-cysteine 96, cysteine 49-cysteine 122, cysteine 50-cysteine 89, cysteine 57-cysteine 82, and cysteine 75-cysteine 87. Residues lysine 106–lysine 117 form an important for membrane-damaging activities in eukaryotes and bacteria; heparin-binding region.

Belongs to the phospholipase A2 family. Group II subfamily. K49 sub-subfamily. As to quaternary structure, homodimer; non-covalently linked. Expressed by the venom gland.

It is found in the secreted. Its function is as follows. Snake venom phospholipase A2 (PLA2) that has almost no phospholipase A2 activity. Is myotoxic. Displays edema-inducing activities. A model of myotoxic mechanism has been proposed: an apo Lys49-PLA2 is activated by the entrance of a hydrophobic molecule (e.g. fatty acid) at the hydrophobic channel of the protein leading to a reorientation of a monomer. This reorientation causes a transition between 'inactive' to 'active' states, causing alignment of C-terminal and membrane-docking sites (MDoS) side-by-side and putting the membrane-disruption sites (MDiS) in the same plane, exposed to solvent and in a symmetric position for both monomers. The MDoS region stabilizes the toxin on membrane by the interaction of charged residues with phospholipid head groups. Subsequently, the MDiS region destabilizes the membrane with penetration of hydrophobic residues. This insertion causes a disorganization of the membrane, allowing an uncontrolled influx of ions (i.e. calcium and sodium), and eventually triggering irreversible intracellular alterations and cell death. The sequence is that of Basic phospholipase A2 homolog from Protobothrops mucrosquamatus (Taiwan habu).